A 420-amino-acid chain; its full sequence is Transcription factor bHLH89 (420 aa).

Positions 196–216 (EENNNLDDGLNRKGRGSKKRK) are disordered. Residues 207-216 (RKGRGSKKRK) show a composition bias toward basic residues. Residues 212–261 (SKKRKIFPTERERRVHFKDRFGDLKNLIPNPTKNDRASIVGEAIDYIKEL) form the bHLH domain.

Homodimer. Flowers.

The protein resides in the nucleus. This chain is Transcription factor bHLH89 (BHLH89), found in Arabidopsis thaliana (Mouse-ear cress).